Reading from the N-terminus, the 115-residue chain is Large ribosomal subunit protein bL20c (115 aa).

Belongs to the bacterial ribosomal protein bL20 family.

The protein resides in the plastid. Its subcellular location is the chloroplast. Binds directly to 23S ribosomal RNA and is necessary for the in vitro assembly process of the 50S ribosomal subunit. It is not involved in the protein synthesizing functions of that subunit. This chain is Large ribosomal subunit protein bL20c, found in Cycas taitungensis (Prince sago).